Consider the following 358-residue polypeptide: MTQKIAVLPGDGIGPEIVEQAVRVLQALNLPLELQEAKVGGAAFDAFEHPLPPATLGLAKSSHAVLFGAVGDWKYDSLPREFRPEQAILGLRRALGLFANLRPAILYPELASASSLKPEIVAGLDIIIIRELTGDIYFGTPRGVRSAPDGVFSGEREGYDTMRYAESEVRRIAHVGFETARKRNKKLCSVDKANVLETSQFWRDIVIEVAREYPDVELSHMYVDNAAMQLVRNPRQFDVIVTGNLFGDILSDEAAMLTGSIGMLPSASLNASGQGLYEPSHGSAPDIAGQGIANPLATILSAAMLLRYSLNQPAQADRIEAAVRKVLAQGLRTADIHEAGTTKVSTSQMGDAVLKALA.

Substrate is bound by residues Arg92, Arg102, Arg130, and Asp224. Residues Asp224, Asp248, and Asp252 each coordinate Mg(2+). Position 282 to 294 (282 to 294 (GSAPDIAGQGIAN)) interacts with NAD(+).

The protein belongs to the isocitrate and isopropylmalate dehydrogenases family. LeuB type 1 subfamily. As to quaternary structure, homodimer. Mg(2+) is required as a cofactor. Mn(2+) serves as cofactor.

Its subcellular location is the cytoplasm. It catalyses the reaction (2R,3S)-3-isopropylmalate + NAD(+) = 4-methyl-2-oxopentanoate + CO2 + NADH. It participates in amino-acid biosynthesis; L-leucine biosynthesis; L-leucine from 3-methyl-2-oxobutanoate: step 3/4. In terms of biological role, catalyzes the oxidation of 3-carboxy-2-hydroxy-4-methylpentanoate (3-isopropylmalate) to 3-carboxy-4-methyl-2-oxopentanoate. The product decarboxylates to 4-methyl-2 oxopentanoate. This is 3-isopropylmalate dehydrogenase from Bordetella avium (strain 197N).